A 155-amino-acid chain; its full sequence is MDATLPFLILYACLSVLLFLWDAKHGLLPDRFTCPLLWSGLLFSQVCNPDCLADALWGAIIGYGTFAVIYWGYRILRHKEGLGYGDVKFLAALGAWHTWTFLPRLVFLAASFACGAVVVGLLMRGKESLKNPLPFGPFLAAAGFVVGWDSLLAGR.

Belongs to the peptidase A24 family.

The protein is Leader peptidase HopD (hopD) of Escherichia coli.